The primary structure comprises 989 residues: MPEPSISALSFTSFVTNDDKLFEETFNFYTKLGFHATRSYVKDNRSDFELTGISTDSIKEIWLESFPLSEVVETSAGRELRKPLQESVGYQSEALLGYSPYQSDGVVIKLRLSNHDLQKNKDLPGEVTFFTASIDKLRAKLIEIGAEIIPSEIDLVEFSTKDPMGDVISFSSYPSLSSKKITSPDFFLHPKKEVRSQESIVEQVKSEEGKKKIAIITSGGDAPGMNAAVRAVTRAGIFYGCKVYACYEGYTGLVKGGDMLKELQWQDVRGLLSIGGTIIGTARSKEFRERWGRLQACYNMVSNGIDALVVCGGDGSLTGADLFRNEWPELIKELLGEGKITKEQYETHRNLTIVGLVGSIDNDMCGTDSTIGAYSSLERIIELVDYIDATAASHSRAFVVEVMGRHCGWLGLMSGIATGADYIFIPERPPSETNWKDDLKKVCLRHREKGRRKTTVIVAEGAIDDQLNPITSEEVKDVLVEIGLDTRITRLGHVQRGGAPCAFDRFLATVQGVDAVRAVLESTPAIPSPVISILENKIVRQPLVESVAQTKTVSDAIEAKDFDKALKLRDQEFATSYESFLSVSKYDDGSYLVPESSRLNIAIIHVGAPTSALNPATRVATLNSLAKGHRVFAIRNGFAGLIRHGAVRELNWIDVEDWHNTGGSEIGTNRSLPSDDMGTVAYYFQQYKFDGLIIIGGFEAFTALYQLDAARAQYPIFNIPMCCLPATVSNNVPGTEYSLGSDTCLNTLSGYCDAVKQSASASRRRTFVVEVQGGYSGYLASYAGLITGALAVYTPENPINLQTVQEDIELLTRTYEEDDGKNRSGKIFIHNEKASKVYTTDLIAAIIGEAGKGRFESRTAVPGHVQQGKSPSSIDRVNACRLAIKCCNFIEDANFQVKHNANLSADERHLRFFYDDGVKTSAVSGKSSVIDDNTSVVIGIQGSEVTFTPVKQLWEKETHHKWRKGKNVHWEQLNIVSDLLSGRLSIRTT.

An N-terminal catalytic PFK domain 1 region spans residues 1–585 (MPEPSISALS…SYESFLSVSK (585 aa)). ATP is bound by residues glycine 220, 283-284 (RS), and 313-316 (GDGS). Residue aspartate 314 participates in Mg(2+) binding. Beta-D-fructose 6-phosphate contacts are provided by residues 359–361 (SID), arginine 396, 403–405 (MGR), glutamate 460, arginine 487, and 493–496 (HVQR). Aspartate 361 serves as the catalytic Proton acceptor. Positions 586–599 (YDDGSYLVPESSRL) are interdomain linker. The segment at 600–989 (NIAIIHVGAP…LSGRLSIRTT (390 aa)) is C-terminal regulatory PFK domain 2. Beta-D-fructose 2,6-bisphosphate-binding positions include arginine 670, 727-731 (TVSNN), arginine 765, 772-774 (QGG), glutamate 832, arginine 858, 864-867 (HVQQ), and arginine 963.

It belongs to the phosphofructokinase type A (PFKA) family. ATP-dependent PFK group I subfamily. Eukaryotic two domain clade 'E' sub-subfamily. As to quaternary structure, heterododecamer of 4 alpha, 4 beta and 4 gamma chains. The gamma chain bridges the N-terminal halves of the alpha and beta subunits. Mg(2+) is required as a cofactor.

It localises to the cytoplasm. The catalysed reaction is beta-D-fructose 6-phosphate + ATP = beta-D-fructose 1,6-bisphosphate + ADP + H(+). The protein operates within carbohydrate degradation; glycolysis; D-glyceraldehyde 3-phosphate and glycerone phosphate from D-glucose: step 3/4. Allosterically activated by ADP, AMP, or fructose 2,6-bisphosphate, and allosterically inhibited by ATP or citrate. In terms of biological role, catalyzes the phosphorylation of D-fructose 6-phosphate to fructose 1,6-bisphosphate by ATP, the first committing step of glycolysis. Involved in the modulation of glucose-induced microautophagy of peroxisomes independent of its ability to metabolize glucose intermediates. This Komagataella phaffii (strain GS115 / ATCC 20864) (Yeast) protein is ATP-dependent 6-phosphofructokinase subunit alpha (PFK1).